Here is a 183-residue protein sequence, read N- to C-terminus: MASRIPQFNQQVLYDTTPLPDSIPKVKELGASSAPLMSAAYFIGARCRDYNDDFMQCKNENPGKGEFECLKEGRRVTRCARSVIADINKSCLEEFRKHWTCLEDNNQQLWQCRPAEWKLNKCVFENLGLKKEIPDQPPNVTPVHLRKQMIYAHWPIPRSAEPFVPPTQTGDNNKAPAAASSSS.

CHCH domains lie at 44–87 (GARC…IADI) and 88–130 (NKSC…LGLK). Short sequence motifs (cx9C motif) lie at residues 47–57 (CRDYNDDFMQC), 69–79 (CLKEGRRVTRC), 91–101 (CLEEFRKHWTC), and 112–122 (CRPAEWKLNKC). Intrachain disulfides connect C47-C79, C57-C69, C91-C122, and C101-C112. The tract at residues 161 to 183 (EPFVPPTQTGDNNKAPAAASSSS) is disordered.

This sequence belongs to the complex I NDUFA8 subunit family. Complex I is composed of about 40 different subunits. This is a component of the hydrophobic fraction. The cofactor is iron-sulfur cluster.

It is found in the mitochondrion inner membrane. Functionally, accessory subunit of the mitochondrial membrane respiratory chain NADH dehydrogenase (Complex I), that is believed not to be involved in catalysis. Complex I functions in the transfer of electrons from NADH to the respiratory chain. The immediate electron acceptor for the enzyme is believed to be ubiquinone. The protein is NADH-ubiquinone oxidoreductase 20.8 kDa subunit of Neurospora crassa (strain ATCC 24698 / 74-OR23-1A / CBS 708.71 / DSM 1257 / FGSC 987).